The sequence spans 239 residues: tRNA (guanine-N(7)-)-methyltransferase (239 aa).

Residues E69, E94, D121, and D144 each contribute to the S-adenosyl-L-methionine site. The active site involves D144. K148 lines the substrate pocket. An interaction with RNA region spans residues 150–155 (RHNKRR). Residues D180 and 217-220 (TKFE) contribute to the substrate site.

The protein belongs to the class I-like SAM-binding methyltransferase superfamily. TrmB family. Monomer.

It catalyses the reaction guanosine(46) in tRNA + S-adenosyl-L-methionine = N(7)-methylguanosine(46) in tRNA + S-adenosyl-L-homocysteine. The protein operates within tRNA modification; N(7)-methylguanine-tRNA biosynthesis. Functionally, catalyzes the formation of N(7)-methylguanine at position 46 (m7G46) in tRNA. The protein is tRNA (guanine-N(7)-)-methyltransferase of Yersinia pestis (strain Pestoides F).